Here is a 682-residue protein sequence, read N- to C-terminus: MSINSPQYSLPSKKEKQRVRELRKFINHHNYLYYTLDDPEISDSEYDKAFQELLTLENTFPSLKTNNSPTQKVGNNILKKLEEQPHRQRMYSLDNVFSNDEWEGFLKRLANALPEVPFSFWCDPKMDGLALELIYEKGQLTSALTRGDGDIGEVVTEAVRTISNIPKRLKHSINAPELLEIRGEVVISRADFKKLNKEQEKKKKKLFANPRNAASGSVRQLDPTITASRPLRFLAYGIGEIQPSSLKWNTYHELMSYLKEYGFETPPKGKLCISSTEVQSYYTRLQAQRYSLRYEIDGIVMKLDDIQSQEKLGYTSRAPRFAIAWKFPATQVQTRLLQIHIQVGRTGVLTPVAELEPINVGGATISRATLHNEDEIKNKDIRPGDMVIVQRAGDVIPEIVSPILSDRSAKSKPFVFPKICPVCHEKVYRINNEVAWRCINLSCPAIRLQSIIYFVSKSGLNIQGIGQRLIELLVTSGCIKTPADLFTLTTADLLTYKRMGAKLAAKTIQALSLAKQTMSLHRLICALGIRHVGEQTARILASSFIDLDALSSASLEDLQQLSEIGPEVASSIQAFFKNKANIQMINQFREMNIWPIQQVNDTTTKGFFTGKKLLFTGTLERPRAEMKRLAEEAGAIVMTGISHKLDYVIAGKNPGSKLNKAQELHISILDEPTFLQKLLIVL.

NAD(+) contacts are provided by residues 43-47 (DSEYD), 92-93 (SL), and aspartate 123. The N6-AMP-lysine intermediate role is filled by lysine 125. 4 residues coordinate NAD(+): arginine 146, glutamate 184, lysine 302, and lysine 326. Residues cysteine 420, cysteine 423, cysteine 438, and cysteine 443 each coordinate Zn(2+). A BRCT domain is found at 603–682 (TTKGFFTGKK…TFLQKLLIVL (80 aa)).

This sequence belongs to the NAD-dependent DNA ligase family. LigA subfamily. It depends on Mg(2+) as a cofactor. Mn(2+) is required as a cofactor.

The catalysed reaction is NAD(+) + (deoxyribonucleotide)n-3'-hydroxyl + 5'-phospho-(deoxyribonucleotide)m = (deoxyribonucleotide)n+m + AMP + beta-nicotinamide D-nucleotide.. Its function is as follows. DNA ligase that catalyzes the formation of phosphodiester linkages between 5'-phosphoryl and 3'-hydroxyl groups in double-stranded DNA using NAD as a coenzyme and as the energy source for the reaction. It is essential for DNA replication and repair of damaged DNA. The sequence is that of DNA ligase from Lawsonia intracellularis (strain PHE/MN1-00).